We begin with the raw amino-acid sequence, 165 residues long: Protein SprT (165 aa).

The SprT-like domain occupies 10–157 (EACYRQAEDF…YCRRCKATLV (148 aa)). His-69 lines the Zn(2+) pocket. Glu-70 is an active-site residue. Residue His-73 participates in Zn(2+) binding.

Belongs to the SprT family. The cofactor is Zn(2+).

It is found in the cytoplasm. The protein is Protein SprT of Pseudomonas paraeruginosa (strain DSM 24068 / PA7) (Pseudomonas aeruginosa (strain PA7)).